Here is a 264-residue protein sequence, read N- to C-terminus: Granzyme K (264 aa).

Residues 1–24 (MTKFSSFSLFFLIVGAYMTHVCFN) form the signal peptide. The propeptide at 25-26 (ME) is activation peptide. A Peptidase S1 domain is found at 27–259 (IIGGKEVSPH…YQTWIKSNLV (233 aa)). The cysteines at positions 52 and 68 are disulfide-linked. Catalysis depends on charge relay system residues H67 and D116. 3 disulfide bridges follow: C149–C220, C181–C199, and C210–C234. The Charge relay system role is filled by S214.

It belongs to the peptidase S1 family. Granzyme subfamily. In terms of tissue distribution, expressed in lung, spleen, thymus and peripheral blood leukocytes.

It localises to the secreted. The protein resides in the cytoplasmic granule. The sequence is that of Granzyme K (GZMK) from Homo sapiens (Human).